The chain runs to 186 residues: Holliday junction branch migration complex subunit RuvA (186 aa).

The tract at residues 1 to 63 (MNDYINGLLH…DNVFKYYGFK (63 aa)) is domain I. Positions 64 to 137 (NQLIRDLFEL…QKELFNNKIS (74 aa)) are domain II. Serine 137 is a region of interest (flexible linker). Positions 137 to 186 (SDKKNKVITSLEKLGYKTKDIYKIIINIDEDMNIEDLTKYVLEQLSYLHN) are domain III.

It belongs to the RuvA family. Homotetramer. Forms an RuvA(8)-RuvB(12)-Holliday junction (HJ) complex. HJ DNA is sandwiched between 2 RuvA tetramers; dsDNA enters through RuvA and exits via RuvB. An RuvB hexamer assembles on each DNA strand where it exits the tetramer. Each RuvB hexamer is contacted by two RuvA subunits (via domain III) on 2 adjacent RuvB subunits; this complex drives branch migration. In the full resolvosome a probable DNA-RuvA(4)-RuvB(12)-RuvC(2) complex forms which resolves the HJ.

Its subcellular location is the cytoplasm. Its function is as follows. The RuvA-RuvB-RuvC complex processes Holliday junction (HJ) DNA during genetic recombination and DNA repair, while the RuvA-RuvB complex plays an important role in the rescue of blocked DNA replication forks via replication fork reversal (RFR). RuvA specifically binds to HJ cruciform DNA, conferring on it an open structure. The RuvB hexamer acts as an ATP-dependent pump, pulling dsDNA into and through the RuvAB complex. HJ branch migration allows RuvC to scan DNA until it finds its consensus sequence, where it cleaves and resolves the cruciform DNA. This Mycoplasma mycoides subsp. mycoides SC (strain CCUG 32753 / NCTC 10114 / PG1) protein is Holliday junction branch migration complex subunit RuvA.